The sequence spans 378 residues: tRNA (guanine(26)-N(2))-dimethyltransferase (378 aa).

Positions 4–374 constitute a Trm1 methyltransferase domain; sequence KEVTEGKVRI…KGYEEIIRCV (371 aa). S-adenosyl-L-methionine contacts are provided by Arg-44, Arg-69, Asp-87, Asp-114, and Ala-115. Zn(2+)-binding residues include Cys-246, Cys-249, Cys-263, and Cys-266.

This sequence belongs to the class I-like SAM-binding methyltransferase superfamily. Trm1 family.

It carries out the reaction guanosine(26) in tRNA + 2 S-adenosyl-L-methionine = N(2)-dimethylguanosine(26) in tRNA + 2 S-adenosyl-L-homocysteine + 2 H(+). Functionally, dimethylates a single guanine residue at position 26 of a number of tRNAs using S-adenosyl-L-methionine as donor of the methyl groups. This Saccharolobus islandicus (strain M.16.27) (Sulfolobus islandicus) protein is tRNA (guanine(26)-N(2))-dimethyltransferase.